Here is a 508-residue protein sequence, read N- to C-terminus: MADGQVAELLLRRLEASDGGLDSAELAAELGMEHQAVVGAVKSLQALGEVIEAELRSTKHWELTAEGEEIAREGSHEARVFRSIPPEGLAQSELMRLPSGKVGFSKAMSNKWIRVDKSAADGPRVFRVVDSMEDEVQRRLQLVRGGQAEKLGEKERSELRKRKLLAEVTLKTYWVSKGSAFSTSISKQETELSPEMISSGSWRDRPFKPYNFLAHGVLPDSGHLHPLLKVRSQFRQIFLEMGFTEMPTDNFIESSFWNFDALFQPQQHPARDQHDTFFLRDPAEALQLPMDYVQRVKRTHSQGGYGSQGYKYNWKLDEARKNLLRTHTTSASARALYRLAQKKPFTPVKYFSIDRVFRNETLDATHLAEFHQIEGVVADHGLTLGHLMGVLREFFTKLGITQLRFKPAYNPYTEPSMEVFSYHQGLKKWVEVGNSGVFRPEMLLPMGLPENVSVIAWGLSLERPTMIKYGINNIRELVGHKVNLQMVYDSPLCRLDAEPRPPPTQEAA.

Ala2 carries the N-acetylalanine modification. Residue Thr190 is modified to Phosphothreonine. A phosphoserine mark is found at Ser193 and Ser301. The residue at position 311 (Lys311) is an N6-acetyllysine. Residues Thr329, 372–374 (QIE), and Tyr412 contribute to the L-phenylalanine site. Position 414 (Glu414) interacts with Mg(2+). Position 438 (Phe438) interacts with L-phenylalanine.

It belongs to the class-II aminoacyl-tRNA synthetase family. Phe-tRNA synthetase alpha subunit type 2 subfamily. Heterotetramer; dimer of two heterodimers formed by FARSA and FARSB.

The protein localises to the cytoplasm. It catalyses the reaction tRNA(Phe) + L-phenylalanine + ATP = L-phenylalanyl-tRNA(Phe) + AMP + diphosphate + H(+). The sequence is that of Phenylalanine--tRNA ligase alpha subunit (FARSA) from Homo sapiens (Human).